Here is a 525-residue protein sequence, read N- to C-terminus: Lysine--tRNA ligase (525 aa).

Residues glutamate 430 and glutamate 437 each contribute to the Mg(2+) site.

This sequence belongs to the class-II aminoacyl-tRNA synthetase family. Homodimer. The cofactor is Mg(2+).

Its subcellular location is the cytoplasm. It carries out the reaction tRNA(Lys) + L-lysine + ATP = L-lysyl-tRNA(Lys) + AMP + diphosphate. This chain is Lysine--tRNA ligase, found in Chlamydia caviae (strain ATCC VR-813 / DSM 19441 / 03DC25 / GPIC) (Chlamydophila caviae).